We begin with the raw amino-acid sequence, 507 residues long: Histidine ammonia-lyase (507 aa).

The segment at residues 141-143 (ASG) is a cross-link (5-imidazolinone (Ala-Gly)). Ser-142 carries the 2,3-didehydroalanine (Ser) modification.

It belongs to the PAL/histidase family. Post-translationally, contains an active site 4-methylidene-imidazol-5-one (MIO), which is formed autocatalytically by cyclization and dehydration of residues Ala-Ser-Gly.

Its subcellular location is the cytoplasm. The catalysed reaction is L-histidine = trans-urocanate + NH4(+). The protein operates within amino-acid degradation; L-histidine degradation into L-glutamate; N-formimidoyl-L-glutamate from L-histidine: step 1/3. This is Histidine ammonia-lyase from Burkholderia cenocepacia (strain HI2424).